A 1234-amino-acid chain; its full sequence is Formin-like protein 3 (1234 aa).

One can recognise a Phosphatase tensin-type domain in the interval 1 to 208 (MRLDSFPASI…QYVARRNISP (208 aa)). Catalysis depends on cysteine 141, which acts as the Phosphocysteine intermediate. Positions 214-352 (ERALSFDCLI…FRAEMLFCEL (139 aa)) constitute a C2 tensin-type domain. Disordered regions lie at residues 443–478 (DSDE…NINH) and 492–840 (LVNT…LKPL). Residues 498–507 (VLPPTTPPPC) show a composition bias toward pro residues. Residues 524–534 (VQHESPSDRKL) show a composition bias toward basic and acidic residues. Composition is skewed to pro residues over residues 536–576 (SPSP…PPLP), 584–656 (QPPP…PPAP), 663–673 (PAPPPPPPPPR), 688–699 (GPPPPPPPPLPP), 709–721 (PSAP…PPPA), 729–739 (APAPPLPPPLP), and 762–784 (PAPP…PPPL). An FH2 domain is found at 827 to 1226 (QQSNPPKKAS…KLEKDKEKAT (400 aa)).

It belongs to the formin-like family. Class-II subfamily.

This chain is Formin-like protein 3 (FH3), found in Oryza sativa subsp. japonica (Rice).